A 63-amino-acid polypeptide reads, in one-letter code: Hyphancin-3G (63 aa).

The N-terminal stretch at 1 to 22 (MNFSRILFFMFACFVALASVSA) is a signal peptide. Positions 23-26 (VPEP) are cleaved as a propeptide — removed by a dipeptidylpeptidase. Leucine 61 is subject to Leucine amide.

This sequence belongs to the cecropin family.

The protein localises to the secreted. Functionally, has antibacterial activity. This chain is Hyphancin-3G, found in Hyphantria cunea (Fall webworm moth).